Here is a 238-residue protein sequence, read N- to C-terminus: Demethylmenaquinone methyltransferase (238 aa).

S-adenosyl-L-methionine is bound by residues T60, D81, and 108–109 (NA).

It belongs to the class I-like SAM-binding methyltransferase superfamily. MenG/UbiE family.

It carries out the reaction a 2-demethylmenaquinol + S-adenosyl-L-methionine = a menaquinol + S-adenosyl-L-homocysteine + H(+). It participates in quinol/quinone metabolism; menaquinone biosynthesis; menaquinol from 1,4-dihydroxy-2-naphthoate: step 2/2. Its function is as follows. Methyltransferase required for the conversion of demethylmenaquinol (DMKH2) to menaquinol (MKH2). The chain is Demethylmenaquinone methyltransferase from Oceanobacillus iheyensis (strain DSM 14371 / CIP 107618 / JCM 11309 / KCTC 3954 / HTE831).